Reading from the N-terminus, the 476-residue chain is Aspartyl/glutamyl-tRNA(Asn/Gln) amidotransferase subunit B (476 aa).

Belongs to the GatB/GatE family. GatB subfamily. Heterotrimer of A, B and C subunits.

It catalyses the reaction L-glutamyl-tRNA(Gln) + L-glutamine + ATP + H2O = L-glutaminyl-tRNA(Gln) + L-glutamate + ADP + phosphate + H(+). The catalysed reaction is L-aspartyl-tRNA(Asn) + L-glutamine + ATP + H2O = L-asparaginyl-tRNA(Asn) + L-glutamate + ADP + phosphate + 2 H(+). Functionally, allows the formation of correctly charged Asn-tRNA(Asn) or Gln-tRNA(Gln) through the transamidation of misacylated Asp-tRNA(Asn) or Glu-tRNA(Gln) in organisms which lack either or both of asparaginyl-tRNA or glutaminyl-tRNA synthetases. The reaction takes place in the presence of glutamine and ATP through an activated phospho-Asp-tRNA(Asn) or phospho-Glu-tRNA(Gln). In Neisseria meningitidis serogroup C / serotype 2a (strain ATCC 700532 / DSM 15464 / FAM18), this protein is Aspartyl/glutamyl-tRNA(Asn/Gln) amidotransferase subunit B.